The following is a 409-amino-acid chain: Elongation factor Tu (409 aa).

Residues 10 to 214 form the tr-type G domain; sequence KPHVNIGTIG…AVDSYIPTPE (205 aa). The tract at residues 19-26 is G1; the sequence is GHVDHGKT. GTP is bound at residue 19–26; sequence GHVDHGKT. Mg(2+) is bound at residue Thr-26. The interval 60-64 is G2; the sequence is GITIN. The segment at 81 to 84 is G3; sequence DCPG. Residues 81-85 and 136-139 each bind GTP; these read DCPGH and NKVD. The segment at 136 to 139 is G4; the sequence is NKVD. Positions 174–176 are G5; the sequence is SGL.

Belongs to the TRAFAC class translation factor GTPase superfamily. Classic translation factor GTPase family. EF-Tu/EF-1A subfamily. Monomer.

The protein resides in the cytoplasm. It carries out the reaction GTP + H2O = GDP + phosphate + H(+). Functionally, GTP hydrolase that promotes the GTP-dependent binding of aminoacyl-tRNA to the A-site of ribosomes during protein biosynthesis. The chain is Elongation factor Tu from Cyanothece sp. (strain PCC 7425 / ATCC 29141).